Here is a 1328-residue protein sequence, read N- to C-terminus: MLLEFLLLIGISLSTACPSECRCAGLDVHCEGKNLTAIPGHIPIATTNLYFSNNLLNSLSKSNFQALPNLQYLDLSNNSIRDIEETLLDSFPGLKYLDLSWNKIRYVPKLSTAPNALVSLNLVHNEISRLDNDLVSHSPYMQTFLIQRNRIQSLPHDFFNSRMVPTLKTVKMAGNPWSCDCRMVNVKQFADSLFAHSNQNIFIVGKCFFPKGLRNYVFRNLSIENLECEKPEYSKTDDGMFKMSCPNNEMEGYHYDSIFLENNKEARHTAHFARDKDGSLLSNGQFTRNYQCAFYRQKQSIHMQKKMQASSSTEPPITTTTMEPMTTSTMDSMDTTESVVTMTTMPEIDTKIVFEHKQLDTTSRDGETLELKCEASGEPTPTITWLFEKQKLTESRKHKLTKNGSVLKIFPFLNTDIGQYECVASNGEESKSHIFSVSLKESEQPVIIDAPMDTNATIGQQVTLRCNAKGFPVPDVVWLFEGIRIPRRNTRYTISDNNIELTIEKVTRHDSGVFTCQAVNSVGSAVATANLLVGAELTEKVDKLLDDSTIEKIAKEAKQKVEKALSSTKDQQRMDKIESPNDLSKLFKFAINLKKVDLGKAREIYEESIRLVQMHIDNGLAFESAMISPNVSYEAVLPVSYVQTLMEKSGCQTGQFAESCEDHCFFSKYRSYDGQCNNHEHPWWGVSEMAFMRLLPPRYENGFNTPVGWEKGKRYNGYEVPNARKVSRVLIGTDETTPHSHLSAMTMQWGQFIDHDLTLTAPALTRHSYKEGAFCNRTCENADPCFNIQLEADDPKLHTGLYQKHPCMEFERNGAACGSGETSPIFQRVTYRDQLNLLTSYLDASGIYGNSEEQALELRDLYSDHGLLRFDIVSGANKPYMPFEKDSDMDCRRNFSRENPIKCFLAGDVRANEQLGLMSMHTIFLREHNRIASRLLEVNENWDGETIFQETRKLIGAMLQHITYNAWLPKILGKATYNTIIGEYKGYNPDVNPTIANEFATAALRFAHTLINTHLFRFDKDFKETKQGHLPLHNAFFAPERLVSEGGVDPLLRGLFAAPIKMPRPDQVLNKELTEKLFNRFHEVALDLAALNIQRGRDHGLPSWTEYRKFCNLTVPKTWSDMKNIVQNDTVISKLQSLYGVTENIDLWVGGVTEKRTADALMGPTLACIIADQFKRLRDGDRFWYENEEMFSKAQLRQIKKVTLSKIICTNGDDIDRIQRDIFVYHGNSTQFYEPCESLPEINLNMWTTCCDAMCSSSSTLARNAIGGDEKAKRRKRRHHHSKKSCHDKGKRRKSGDRWNHSNDICVECMCHDGEVWCKTNNFCKSQV.

Residues 1–16 form the signal peptide; it reads MLLEFLLLIGISLSTA. Residues 17 to 45 enclose the LRRNT domain; sequence CPSECRCAGLDVHCEGKNLTAIPGHIPIA. N-linked (GlcNAc...) asparagine glycosylation occurs at Asn-34. LRR repeat units lie at residues 42–66, 67–90, 92–114, 116–137, 138–161, and 164–191; these read IPIA…NFQA, LPNL…LLDS, PGLK…STAP, ALVS…LVSH, SPYM…FFNS, and VPTL…QFAD. A glycan (N-linked (GlcNAc...) asparagine) is linked at Asn-77. A glycan (N-linked (GlcNAc...) asparagine) is linked at Asn-220. The disordered stretch occupies residues 305–332; sequence KKMQASSSTEPPITTTTMEPMTTSTMDS. Low complexity predominate over residues 310-332; the sequence is SSSTEPPITTTTMEPMTTSTMDS. Ig-like C2-type domains follow at residues 346 to 438 and 445 to 532; these read PEID…FSVS and PVII…ANLL. A disulfide bond links Cys-373 and Cys-422. N-linked (GlcNAc...) asparagine glycans are attached at residues Asn-403 and Asn-455. The cysteines at positions 466 and 516 are disulfide-linked. An N-linked (GlcNAc...) asparagine glycan is attached at Asn-630. Cys-660 and Cys-676 form a disulfide bridge. Asp-754 is a binding site for heme b. The Proton acceptor role is filled by His-755. Asp-756 contacts Ca(2+). 2 disulfide bridges follow: Cys-775–Cys-785 and Cys-779–Cys-807. A glycan (N-linked (GlcNAc...) asparagine) is linked at Asn-776. 4 residues coordinate Ca(2+): Thr-839, Tyr-841, Asp-843, and Ser-845. N-linked (GlcNAc...) asparagine glycosylation is present at Asn-894. Heme b contacts are provided by Glu-913 and His-1008. Residues 1085–1109 form an LRR 7 repeat; it reads ALDLAALNIQRGRDHGLPSWTEYRK. Cystine bridges form between Cys-1111–Cys-1168 and Cys-1209–Cys-1236. 2 N-linked (GlcNAc...) asparagine glycosylation sites follow: Asn-1112 and Asn-1128. An LRR 8 repeat occupies 1204–1225; it reads LSKIICTNGDDIDRIQRDIFVY. Residue Asn-1228 is glycosylated (N-linked (GlcNAc...) asparagine). Residues 1266–1297 are disordered; sequence IGGDEKAKRRKRRHHHSKKSCHDKGKRRKSGD. Residues 1273 to 1295 are compositionally biased toward basic residues; the sequence is KRRKRRHHHSKKSCHDKGKRRKS. N-linked (GlcNAc...) asparagine glycosylation occurs at Asn-1300.

The protein belongs to the peroxidase family. XPO subfamily. The cofactor is Ca(2+). Heme b serves as cofactor. As to expression, expressed in vulval muscles and in some neurons including PVQ. Expressed in the hypodermis and in coelomocytes.

Its subcellular location is the secreted. It is found in the extracellular space. The protein resides in the extracellular matrix. It localises to the basement membrane. It catalyses the reaction L-lysyl-[collagen] + L-methionyl-[collagen] + H2O2 = [collagen]-L-lysyl-N-S-L-methionyl-[collagen] + 2 H2O + H(+). The enzyme catalyses bromide + H2O2 = hypobromite + H2O. The catalysed reaction is L-lysyl-[collagen] + L-methionyl-[collagen] + hypobromite = [collagen]-L-lysyl-N-S-L-methionyl-[collagen] + bromide + H2O + H(+). It carries out the reaction L-tyrosyl-[protein] + bromide + H2O2 + H(+) = 3-bromo-L-tyrosyl-[protein] + 2 H2O. It catalyses the reaction hypobromite + L-tyrosyl-[protein] + H(+) = 3-bromo-L-tyrosyl-[protein] + H2O. Functionally, catalyzes the two-electron oxidation of bromide by hydrogen peroxide and generates hypobromite as a reactive intermediate which mediates the formation of sulfilimine cross-links between methionine and hydroxylysine residues within an uncross-linked collagen IV/COL4A1 NC1 hexamer. Required for embryonic morphogenesis playing a role in epidermal elongation at the twofold stage of embryonic development. Required post-embryonically for basement membrane integrity and muscle-epidermal attachments, and specifically in the function of basement membrane components such as the type IV collagens. May have a role in inhibiting axon regeneration. May functionally antagonize the peroxidasin pxn-1. This chain is Peroxidasin homolog pxn-2, found in Caenorhabditis elegans.